A 514-amino-acid polypeptide reads, in one-letter code: 3-octaprenyl-4-hydroxybenzoate carboxy-lyase (514 aa).

Mn(2+) is bound at residue asparagine 177. Prenylated FMN-binding positions include 180 to 182 (IYR), 194 to 196 (RWL), and 199 to 200 (RG). Glutamate 243 is a binding site for Mn(2+). Aspartate 314 acts as the Proton donor in catalysis.

The protein belongs to the UbiD family. Homohexamer. It depends on prenylated FMN as a cofactor. Mn(2+) serves as cofactor.

It localises to the cell membrane. It carries out the reaction a 4-hydroxy-3-(all-trans-polyprenyl)benzoate + H(+) = a 2-(all-trans-polyprenyl)phenol + CO2. It functions in the pathway cofactor biosynthesis; ubiquinone biosynthesis. Its function is as follows. Catalyzes the decarboxylation of 3-octaprenyl-4-hydroxy benzoate to 2-octaprenylphenol, an intermediate step in ubiquinone biosynthesis. The sequence is that of 3-octaprenyl-4-hydroxybenzoate carboxy-lyase from Bordetella parapertussis (strain 12822 / ATCC BAA-587 / NCTC 13253).